Consider the following 864-residue polypeptide: Protein translocase subunit SecA (864 aa).

Residues glutamine 85, 103 to 107 (GEGKT), and aspartate 542 contribute to the ATP site.

The protein belongs to the SecA family. Monomer and homodimer. Part of the essential Sec protein translocation apparatus which comprises SecA, SecYEG and auxiliary proteins SecDF. Other proteins may also be involved.

Its subcellular location is the cell inner membrane. The protein resides in the cytoplasm. It catalyses the reaction ATP + H2O + cellular proteinSide 1 = ADP + phosphate + cellular proteinSide 2.. In terms of biological role, part of the Sec protein translocase complex. Interacts with the SecYEG preprotein conducting channel. Has a central role in coupling the hydrolysis of ATP to the transfer of proteins into and across the cell membrane, serving as an ATP-driven molecular motor driving the stepwise translocation of polypeptide chains across the membrane. This Fervidobacterium nodosum (strain ATCC 35602 / DSM 5306 / Rt17-B1) protein is Protein translocase subunit SecA.